Reading from the N-terminus, the 364-residue chain is Palmitoyltransferase ZDHHC9 (364 aa).

At 1–35 (MSVMVVRKKVTRKWEKLPGRNTFCCDGRVMMARQK) the chain is on the cytoplasmic side. A helical membrane pass occupies residues 36-56 (GIFYLTLFLILGTCTLFFAFE). At 57–63 (CRYLAVQ) the chain is on the lumenal side. A helical membrane pass occupies residues 64-84 (LSPAIPVFAAMLFLFSMATLL). The Cytoplasmic segment spans residues 85–183 (RTSFSDPGVI…NCVGKRNYRY (99 aa)). Residues 139 to 189 (KYCYTCKIFRPPRASHCSICDNCVERFDHHCPWVGNCVGKRNYRYFYLFIL) enclose the DHHC domain. Cys-169 serves as the catalytic S-palmitoyl cysteine intermediate. Residues 184 to 204 (FYLFILSLSLLTIYVFAFNIV) traverse the membrane as a helical segment. Residues 205 to 228 (YVALKSLKIGFLETLKETPGTVLE) lie on the Lumenal side of the membrane. The chain crosses the membrane as a helical span at residues 229-249 (VLICFFTLWSVVGLTGFHTFL). At 250–364 (VALNQTTNED…PPQEAAEAEK (115 aa)) the chain is on the cytoplasmic side. Positions 303–364 (PLEESGSRPP…PPQEAAEAEK (62 aa)) are disordered. Polar residues predominate over residues 310–323 (RPPSTQETSSSLLP). Pro residues predominate over residues 346–356 (EMPPPEPPEPP).

This sequence belongs to the DHHC palmitoyltransferase family. ERF2/ZDHHC9 subfamily. As to quaternary structure, interacts with GOLGA7. In terms of tissue distribution, highly expressed in kidney, skeletal muscle, brain, lung and liver. Absent in thymus, spleen and leukocytes.

It localises to the endoplasmic reticulum membrane. The protein localises to the golgi apparatus membrane. The enzyme catalyses L-cysteinyl-[protein] + hexadecanoyl-CoA = S-hexadecanoyl-L-cysteinyl-[protein] + CoA. In terms of biological role, palmitoyltransferase that catalyzes the addition of palmitate onto various protein substrates, such as ADRB2, GSDMD, HRAS, NRAS and CGAS. The ZDHHC9-GOLGA7 complex is a palmitoyltransferase specific for HRAS and NRAS. May have a palmitoyltransferase activity toward the beta-2 adrenergic receptor/ADRB2 and therefore regulate G protein-coupled receptor signaling. Acts as a regulator of innate immunity by catalyzing palmitoylation of CGAS, thereby promoting CGAS homodimerization and cyclic GMP-AMP synthase activity. Activates pyroptosis by catalyzing palmitoylation of gasdermin-D (GSDMD), thereby promoting membrane translocation and pore formation of GSDMD. Functionally, (Microbial infection) Through a sequential action with ZDHHC20, rapidly and efficiently palmitoylates SARS coronavirus-2/SARS-CoV-2 spike protein following its synthesis in the endoplasmic reticulum (ER). In the infected cell, promotes spike biogenesis by protecting it from premature ER degradation, increases half-life and controls the lipid organization of its immediate membrane environment. Once the virus has formed, spike palmitoylation controls fusion with the target cell. In Homo sapiens (Human), this protein is Palmitoyltransferase ZDHHC9.